A 240-amino-acid polypeptide reads, in one-letter code: Adenosylcobinamide-GDP ribazoletransferase (240 aa).

5 consecutive transmembrane segments (helical) span residues 31–51 (LLYY…ASHL), 62–81 (ALLL…DGLA), 109–129 (IAVV…WVLV), 133–153 (IGAQ…GLFL), and 179–199 (VLLV…LLAL).

It belongs to the CobS family. Mg(2+) is required as a cofactor.

The protein resides in the cell inner membrane. It catalyses the reaction alpha-ribazole + adenosylcob(III)inamide-GDP = adenosylcob(III)alamin + GMP + H(+). The catalysed reaction is alpha-ribazole 5'-phosphate + adenosylcob(III)inamide-GDP = adenosylcob(III)alamin 5'-phosphate + GMP + H(+). The protein operates within cofactor biosynthesis; adenosylcobalamin biosynthesis; adenosylcobalamin from cob(II)yrinate a,c-diamide: step 7/7. Joins adenosylcobinamide-GDP and alpha-ribazole to generate adenosylcobalamin (Ado-cobalamin). Also synthesizes adenosylcobalamin 5'-phosphate from adenosylcobinamide-GDP and alpha-ribazole 5'-phosphate. In Pseudomonas putida (strain ATCC 700007 / DSM 6899 / JCM 31910 / BCRC 17059 / LMG 24140 / F1), this protein is Adenosylcobinamide-GDP ribazoletransferase.